A 243-amino-acid chain; its full sequence is R-spondin-2 (243 aa).

A signal peptide spans methionine 1 to cysteine 21. 11 disulfides stabilise this stretch: cysteine 40–cysteine 46, cysteine 43–cysteine 52, cysteine 55–cysteine 74, cysteine 78–cysteine 93, cysteine 96–cysteine 104, cysteine 101–cysteine 110, cysteine 113–cysteine 124, cysteine 128–cysteine 141, cysteine 145–cysteine 187, cysteine 156–cysteine 163, and cysteine 196–cysteine 203. One copy of the FU repeat lies at methionine 90–proline 134. The TSP type-1 domain occupies glycine 144–proline 204. A glycan (N-linked (GlcNAc...) asparagine) is linked at asparagine 160. Residues histidine 202 to glutamine 243 are disordered. A compositionally biased stretch (basic residues) spans threonine 209–leucine 224.

It belongs to the R-spondin family. In terms of assembly, binds heparin.

Its subcellular location is the secreted. Functionally, activator of the canonical Wnt signaling pathway by acting as a ligand for lgr4-6 receptors. Upon binding to lgr4-6 (lgr4, lgr5 or lgr6), lgr4-6 associate with phosphorylated lrp6 and frizzled receptors that are activated by extracellular Wnt receptors, triggering the canonical Wnt signaling pathway to increase expression of target genes. Acts both in the canonical. Wnt/beta-catenin-dependent pathway and in non-canonical Wnt signaling pathway. Activates neural markers and promotes muscle formation. Overexpression blocks activin, nodal and BMP4 signaling, suggesting that it may negatively regulate the TGF-beta pathway. During embryonic development, plays a crucial role in limb specification, amplifying the Wnt signaling pathway independently of LGR4-6 receptors, possibly by acting as a direct antagonistic ligand to RNF43 and ZNRF3, hence governing the number of limbs an embryo should form. This is R-spondin-2 (rspo2) from Xenopus tropicalis (Western clawed frog).